The following is a 418-amino-acid chain: Diacylglycerol O-acyltransferase 1 (418 aa).

The segment at 1 to 30 (MSGTFNDIRRRKKEEGSPTAGITERHENKS) is disordered. Residues 1–71 (MSGTFNDIRR…LAVAWHTSSF (71 aa)) lie on the Cytoplasmic side of the membrane. Position 17 is a phosphoserine (serine 17). A helical transmembrane segment spans residues 72-92 (VLFSIFTLFAISTPALWVLAI). Over 93-186 (PYMIYFFFDR…DYRNQECTGP (94 aa)) the chain is Lumenal. A glycan (N-linked (GlcNAc...) asparagine) is linked at asparagine 173. The chain crosses the membrane as a helical span at residues 187-207 (TYLFGYHPHGIGALGAFGAFA). The Cytoplasmic segment spans residues 208–215 (TEGCNYSK). The helical transmembrane segment at 216 to 236 (IFPGIPISLMTLVTQFHIPLY) threads the bilayer. The Lumenal segment spans residues 237-289 (RDYLLALGISSVSRKNALRTLSKNQSICIVVGGARESLLSSTNGTQLILNKRK). 2 N-linked (GlcNAc...) asparagine glycosylation sites follow: asparagine 260 and asparagine 279. The chain crosses the membrane as a helical span at residues 290–310 (GFIKLAIQTGNINLVPVFAFG). Residues 311–418 (EVDCYNVLST…VPDAELKIVG (108 aa)) are Cytoplasmic-facing.

The protein belongs to the diacylglycerol acyltransferase family.

The protein localises to the lipid droplet. It localises to the endoplasmic reticulum membrane. It catalyses the reaction an acyl-CoA + a 1,2-diacyl-sn-glycerol = a triacyl-sn-glycerol + CoA. The enzyme catalyses a 2-acylglycerol + an acyl-CoA = a 1,2-diacylglycerol + CoA. It carries out the reaction 2-(9Z-octadecenoyl)-glycerol + (9Z)-octadecenoyl-CoA = 1,2-di-(9Z-octadecenoyl)-glycerol + CoA. The protein operates within glycerolipid metabolism; triacylglycerol biosynthesis. Functionally, catalyzes the terminal and only committed step in triacylglycerol (TAG) synthesis by using diacylglycerol (DAG) and fatty acyl-CoA as substrates. Required for storage lipid synthesis. Major DAG esterifying enzyme in stationary phase when TAG production is particularly active. Involved in lipid particle synthesis from the endoplasmic reticulum, promoting localized TAG production at discrete ER subdomains, and in ergosterol biosynthesis. Also has monoacylglycerol acyltransferase (MGAT) activity, catalyzing the acyl-CoA-dependent esterification of monoacylglycerol to diacylglycerol. Can also utilize ceramide instead of DAG, acylating the ceramides by attaching a fatty acid to the hydroxy group on the first carbon atom of the long-chain base to produce 1-O-acylceramides. The sequence is that of Diacylglycerol O-acyltransferase 1 (DGA1) from Saccharomyces cerevisiae (strain ATCC 204508 / S288c) (Baker's yeast).